The following is a 344-amino-acid chain: Tetraacyldisaccharide 4'-kinase (344 aa).

An ATP-binding site is contributed by 68-75 (TAGGNGKT).

Belongs to the LpxK family.

The enzyme catalyses a lipid A disaccharide + ATP = a lipid IVA + ADP + H(+). It participates in glycolipid biosynthesis; lipid IV(A) biosynthesis; lipid IV(A) from (3R)-3-hydroxytetradecanoyl-[acyl-carrier-protein] and UDP-N-acetyl-alpha-D-glucosamine: step 6/6. In terms of biological role, transfers the gamma-phosphate of ATP to the 4'-position of a tetraacyldisaccharide 1-phosphate intermediate (termed DS-1-P) to form tetraacyldisaccharide 1,4'-bis-phosphate (lipid IVA). This chain is Tetraacyldisaccharide 4'-kinase, found in Photobacterium profundum (strain SS9).